Consider the following 55-residue polypeptide: ATP synthase protein 8 (55 aa).

The chain crosses the membrane as a helical span at residues 4–24 (LNPNPWFTILIFTWAVFLTIL).

It belongs to the ATPase protein 8 family. F-type ATPases have 2 components, CF(1) - the catalytic core - and CF(0) - the membrane proton channel.

Its subcellular location is the mitochondrion membrane. Its function is as follows. Mitochondrial membrane ATP synthase (F(1)F(0) ATP synthase or Complex V) produces ATP from ADP in the presence of a proton gradient across the membrane which is generated by electron transport complexes of the respiratory chain. F-type ATPases consist of two structural domains, F(1) - containing the extramembraneous catalytic core and F(0) - containing the membrane proton channel, linked together by a central stalk and a peripheral stalk. During catalysis, ATP synthesis in the catalytic domain of F(1) is coupled via a rotary mechanism of the central stalk subunits to proton translocation. Part of the complex F(0) domain. Minor subunit located with subunit a in the membrane. The protein is ATP synthase protein 8 (mt-atp8) of Polypterus ornatipinnis (Ornate bichir).